A 119-amino-acid chain; its full sequence is Acidic phospholipase A2 DE-III (119 aa).

7 cysteine pairs are disulfide-bonded: C11-C72, C26-C118, C28-C44, C43-C99, C50-C92, C60-C85, and C79-C90. 3 residues coordinate Ca(2+): Y27, G29, and G31. H47 is a catalytic residue. D48 contacts Ca(2+). The active site involves D93.

This sequence belongs to the phospholipase A2 family. Group I subfamily. D49 sub-subfamily. The cofactor is Ca(2+). As to expression, expressed by the venom gland.

Its subcellular location is the secreted. It catalyses the reaction a 1,2-diacyl-sn-glycero-3-phosphocholine + H2O = a 1-acyl-sn-glycero-3-phosphocholine + a fatty acid + H(+). PLA2 catalyzes the calcium-dependent hydrolysis of the 2-acyl groups in 3-sn-phosphoglycerides. The polypeptide is Acidic phospholipase A2 DE-III (Naja melanoleuca (Forest cobra)).